We begin with the raw amino-acid sequence, 623 residues long: uncharacterized protein (623 aa).

One can recognise a GAF domain in the interval 28–171 (TSAEVSQRVL…TIATLFAQVQ (144 aa)). In terms of domain architecture, GGDEF spans 212–345 (GPVAALFLDL…GGDSVAIFTA (134 aa)). In terms of domain architecture, EAL spans 354–609 (RNDIELHLRR…AMRHMLSARR (256 aa)).

This is an uncharacterized protein from Mycobacterium tuberculosis (strain CDC 1551 / Oshkosh).